We begin with the raw amino-acid sequence, 152 residues long: SsrA-binding protein (152 aa).

This sequence belongs to the SmpB family.

The protein resides in the cytoplasm. Required for rescue of stalled ribosomes mediated by trans-translation. Binds to transfer-messenger RNA (tmRNA), required for stable association of tmRNA with ribosomes. tmRNA and SmpB together mimic tRNA shape, replacing the anticodon stem-loop with SmpB. tmRNA is encoded by the ssrA gene; the 2 termini fold to resemble tRNA(Ala) and it encodes a 'tag peptide', a short internal open reading frame. During trans-translation Ala-aminoacylated tmRNA acts like a tRNA, entering the A-site of stalled ribosomes, displacing the stalled mRNA. The ribosome then switches to translate the ORF on the tmRNA; the nascent peptide is terminated with the 'tag peptide' encoded by the tmRNA and targeted for degradation. The ribosome is freed to recommence translation, which seems to be the essential function of trans-translation. The polypeptide is SsrA-binding protein (Rickettsia bellii (strain RML369-C)).